Consider the following 607-residue polypeptide: LRR receptor kinase SERK2 (607 aa).

An N-terminal signal peptide occupies residues 1–21 (MRELRVAVLIIAVSLPSFSAS). Residues 22 to 219 (DRQGDALYDM…QSGSHSSKIG (198 aa)) lie on the Extracellular side of the membrane. 2 N-linked (GlcNAc...) asparagine glycosylation sites follow: Asn36 and Asn110. LRR repeat units follow at residues 87-110 (LKYL…QFGN), 111-135 (LSSL…LGQL), 136-159 (SKLQ…LAKI), and 160-183 (SSLT…LFQV). Asn149, Asn171, Asn187, and Asn206 each carry an N-linked (GlcNAc...) asparagine glycan. Residues 220–240 (IVLGTVGGVIGLLIVAALFLF) traverse the membrane as a helical segment. Over 241 to 607 (CKGRRKSHLR…QEAIELSGGR (367 aa)) the chain is Cytoplasmic. Residues 284–563 (FSERNVLGQG…VVRMLEGEGL (280 aa)) form the Protein kinase domain. Residues 290–298 (LGQGGFGKV) and Lys312 each bind ATP. The Proton acceptor role is filled by Asp411.

This sequence belongs to the protein kinase superfamily. Ser/Thr protein kinase family.

Its subcellular location is the cell membrane. The catalysed reaction is L-seryl-[protein] + ATP = O-phospho-L-seryl-[protein] + ADP + H(+). The enzyme catalyses L-threonyl-[protein] + ATP = O-phospho-L-threonyl-[protein] + ADP + H(+). Functionally, may be involved in the regulation of plant growth through the brassinosteroid (BR) signaling pathway. The protein is LRR receptor kinase SERK2 of Oryza sativa subsp. japonica (Rice).